Consider the following 324-residue polypeptide: Glyoxylate/hydroxypyruvate reductase B (324 aa).

Catalysis depends on residues Arg237 and Glu266. The active-site Proton donor is His285.

It belongs to the D-isomer specific 2-hydroxyacid dehydrogenase family. GhrB subfamily. As to quaternary structure, homodimer.

The protein resides in the cytoplasm. It catalyses the reaction glycolate + NADP(+) = glyoxylate + NADPH + H(+). The enzyme catalyses (R)-glycerate + NAD(+) = 3-hydroxypyruvate + NADH + H(+). The catalysed reaction is (R)-glycerate + NADP(+) = 3-hydroxypyruvate + NADPH + H(+). Catalyzes the NADPH-dependent reduction of glyoxylate and hydroxypyruvate into glycolate and glycerate, respectively. This is Glyoxylate/hydroxypyruvate reductase B from Shigella flexneri.